The sequence spans 239 residues: LexA repressor (239 aa).

Positions 26 to 46 (FDEMKDALDLKSKSGIHRLIT) form a DNA-binding region, H-T-H motif. Active-site for autocatalytic cleavage activity residues include Ser-160 and Lys-198.

Belongs to the peptidase S24 family. In terms of assembly, homodimer.

The enzyme catalyses Hydrolysis of Ala-|-Gly bond in repressor LexA.. In terms of biological role, represses a number of genes involved in the response to DNA damage (SOS response), including recA and lexA. In the presence of single-stranded DNA, RecA interacts with LexA causing an autocatalytic cleavage which disrupts the DNA-binding part of LexA, leading to derepression of the SOS regulon and eventually DNA repair. This chain is LexA repressor, found in Methylobacterium sp. (strain 4-46).